We begin with the raw amino-acid sequence, 456 residues long: Enolase (456 aa).

Residue Gln-177 participates in (2R)-2-phosphoglycerate binding. The active-site Proton donor is the Glu-219. Mg(2+) contacts are provided by Asp-256, Glu-310, and Asp-337. 4 residues coordinate (2R)-2-phosphoglycerate: Lys-362, Arg-391, Ser-392, and Lys-413. The active-site Proton acceptor is Lys-362.

It belongs to the enolase family. As to quaternary structure, homodimer. Mg(2+) is required as a cofactor.

It localises to the cytoplasm. It is found in the secreted. Its subcellular location is the cell surface. It catalyses the reaction (2R)-2-phosphoglycerate = phosphoenolpyruvate + H2O. It functions in the pathway carbohydrate degradation; glycolysis; pyruvate from D-glyceraldehyde 3-phosphate: step 4/5. Its function is as follows. Catalyzes the reversible conversion of 2-phosphoglycerate (2-PG) into phosphoenolpyruvate (PEP). It is essential for the degradation of carbohydrates via glycolysis. 'Moonlights' as a plasminogen receptor. Binds plasminogen, but no fibronectin binding was observed. Plasminogen binding increases bacterial adherence to host cells; plasmin activity leads to degradation of host extracellular matrix proteins, facilitating bacterial dissemination and disease spread. The sequence is that of Enolase from Mycoplasma pneumoniae (strain ATCC 29342 / M129 / Subtype 1) (Mycoplasmoides pneumoniae).